The following is a 937-amino-acid chain: Lysosomal alpha-glucosidase (937 aa).

A signal peptide spans 1-23 (MMRWPPCSRPLLGVCTLLSLALL). The propeptide occupies 24–60 (GHILLHDLEVVPRELRGFSQDEIHQACQPGASSPECR). The region spanning 68 to 118 (TQCDLPPNSRFDCAPDKGITPQQCEARGCCYMPAEWPPDAQMGQPWCFFPP) is the P-type domain. 3 disulfide bridges follow: Cys-70/Cys-97, Cys-80/Cys-96, and Cys-91/Cys-114. Asn-127, Asn-220, Asn-259, and Asn-377 each carry an N-linked (GlcNAc...) asparagine glycan. Residue Asp-391 coordinates substrate. N-linked (GlcNAc...) asparagine glycosylation is present at Asn-457. The active-site Nucleophile is the Asp-505. The active site involves Glu-508. Cys-520 and Cys-545 are joined by a disulfide. Substrate contacts are provided by Arg-587 and Asp-603. Cys-634 and Cys-645 are disulfide-bonded. A glycan (N-linked (GlcNAc...) asparagine) is linked at Asn-639. Position 661 (His-661) interacts with substrate. Residues Asn-867, Asn-888, and Asn-910 are each glycosylated (N-linked (GlcNAc...) asparagine).

This sequence belongs to the glycosyl hydrolase 31 family.

Its subcellular location is the lysosome. The protein resides in the lysosome membrane. It catalyses the reaction Hydrolysis of terminal, non-reducing (1-&gt;4)-linked alpha-D-glucose residues with release of alpha-D-glucose.. Functionally, essential for the degradation of glycogen in lysosomes. Has highest activity on alpha-1,4-linked glycosidic linkages, but can also hydrolyze alpha-1,6-linked glucans. This Bos taurus (Bovine) protein is Lysosomal alpha-glucosidase (GAA).